Reading from the N-terminus, the 349-residue chain is Phosphate acetyltransferase (349 aa).

Belongs to the phosphate acetyltransferase and butyryltransferase family.

Its subcellular location is the cytoplasm. The enzyme catalyses acetyl-CoA + phosphate = acetyl phosphate + CoA. It participates in metabolic intermediate biosynthesis; acetyl-CoA biosynthesis; acetyl-CoA from acetate: step 2/2. The protein is Phosphate acetyltransferase (pta) of Rickettsia felis (strain ATCC VR-1525 / URRWXCal2) (Rickettsia azadi).